A 1051-amino-acid polypeptide reads, in one-letter code: Ubiquitin carboxyl-terminal hydrolase 28 (1051 aa).

Positions 60–82 are disordered; it reads DQRVKEPSHDTTAAEPSEVEESA. A Phosphoserine modification is found at Ser-67. Residues 97–116 enclose the UIM domain; the sequence is DNKDDLQAAIALSLLESPNI. Residue Lys-99 forms a Glycyl lysine isopeptide (Lys-Gly) (interchain with G-Cter in SUMO2) linkage. Residues 121–135 are compositionally biased toward basic and acidic residues; that stretch reads RDLNRAHEANSAETK. The tract at residues 121–140 is disordered; sequence RDLNRAHEANSAETKRSKRK. A USP domain is found at 162–655; sequence VGLKNVGNTC…SAYCLMYIND (494 aa). Residue Cys-171 is the Nucleophile of the active site. Ser-376 carries the post-translational modification Phosphoserine. The disordered stretch occupies residues 483–538; that stretch reads DLTPKESSSPESCSQNAGSTFSSPEDALPSSEGMNGPFTSPHSSLETPAPPAPRTV. Polar residues-rich tracts occupy residues 487-505 and 519-528; these read KESSSPESCSQNAGSTFSS and PFTSPHSSLE. Ser-555 is subject to Phosphoserine. His-605 functions as the Proton acceptor in the catalytic mechanism. Residues 703–735 form a disordered region; that stretch reads EEQSCKIPQMESSPNSSSQDFSTSQESPAVSSH. The span at 713 to 730 shows a compositional bias: low complexity; that stretch reads ESSPNSSSQDFSTSQESP. Phosphoserine is present on Ser-720. Thr-1022 is subject to Phosphothreonine.

Belongs to the peptidase C19 family. USP28 subfamily. As to quaternary structure, interacts with ZNF304. Interacts with PRKD1. Interacts with TP53BP1. Interacts with FBXW7; following DNA damage, dissociates from FBXW7 leading to degradation of MYC. In terms of processing, degraded upon nickel ion level or hypoxia exposure. Post-translationally, phosphorylated upon DNA damage at Ser-67 and Ser-720, by ATM or ATR. Phosphorylated by PRKD1.

Its subcellular location is the nucleus. The protein resides in the nucleoplasm. The catalysed reaction is Thiol-dependent hydrolysis of ester, thioester, amide, peptide and isopeptide bonds formed by the C-terminal Gly of ubiquitin (a 76-residue protein attached to proteins as an intracellular targeting signal).. Functionally, deubiquitinase involved in DNA damage response checkpoint and MYC proto-oncogene stability. Involved in DNA damage induced apoptosis by specifically deubiquitinating proteins of the DNA damage pathway such as CLSPN. Also involved in G2 DNA damage checkpoint, by deubiquitinating CLSPN, and preventing its degradation by the anaphase promoting complex/cyclosome (APC/C). In contrast, it does not deubiquitinate PLK1. Specifically deubiquitinates MYC in the nucleoplasm, leading to prevent MYC degradation by the proteasome: acts by specifically interacting with FBXW7 (FBW7alpha) in the nucleoplasm and counteracting ubiquitination of MYC by the SCF(FBXW7) complex. Deubiquitinates ZNF304, hence preventing ZNF304 degradation by the proteasome and leading to the activated KRAS-mediated promoter hypermethylation and transcriptional silencing of tumor suppressor genes (TSGs) in a subset of colorectal cancers (CRC) cells. The sequence is that of Ubiquitin carboxyl-terminal hydrolase 28 (Usp28) from Mus musculus (Mouse).